Consider the following 132-residue polypeptide: Small ribosomal subunit protein uS8 (132 aa).

Belongs to the universal ribosomal protein uS8 family. In terms of assembly, part of the 30S ribosomal subunit. Contacts proteins S5 and S12.

One of the primary rRNA binding proteins, it binds directly to 16S rRNA central domain where it helps coordinate assembly of the platform of the 30S subunit. In Xanthomonas axonopodis pv. citri (strain 306), this protein is Small ribosomal subunit protein uS8.